We begin with the raw amino-acid sequence, 396 residues long: MTHISTHRPRIAVIGGGIAGLTVAASLLRAGIECTVYEQATVFADAGAGIQLAPNSARILHRLGLAGALERRATRAHAIETRRWRDGAPLARTELGASCVERYGAPYYLIQRADLHRSLLELLPPGVVRHSAACTAAEERPDGVTLRFADGTSEEAGVVVGADGIHSALRNTLVGDRPRFSGHTVHRGLVAADRLPSLFEVPKVLFWLGPNGHVTSYPIARHGLVHFSAVITSPEWDPEVWSAPSRPEEAAAAFAGWNSDVAELIGAAEGTHHWALFDRDCVGGWSTGRMTLAGDAAHPMVPYLSQGANQAIEDAWVLADLLGAADVDPGPALRRYEELRLPRVREVHRRSRERGHEFHLPDGPRQRLRDRSMPTAERLDDYAWLYGFEAAPVGSR.

FAD contacts are provided by residues alanine 19, 38–39, and arginine 112; that span reads EQ. Catalysis depends on tyrosine 217, which acts as the Proton acceptor. Residue aspartate 295 coordinates FAD.

Belongs to the 6-hydroxynicotinate 3-monooxygenase family. The cofactor is FAD.

It carries out the reaction 3-amino-4-hydroxybenzoate + NADPH + O2 + H(+) = 3-amino-2,4-dihydroxybenzoate + NADP(+) + H2O. It participates in antibiotic biosynthesis. Part of a gene cluster involved in the biosynthesis of thioplatencin (ThioPTN) and platencin (PTN), potent and selective inhibitors of bacterial and mammalian fatty acid synthases. Catalyzes the hydroxylation of 3-amino-4-hydroxybenzoate (3,4-AHBA) to 3-amino-2,4-dihydroxybenzoate (3,2,4-ADHBA). This chain is 3-amino-4-hydroxybenzoate 2-monooxygenase PtnB3, found in Streptomyces platensis.